The sequence spans 384 residues: Glucans biosynthesis protein C (384 aa).

The next 10 membrane-spanning stretches (helical) occupy residues 17–37 (AWLMLLGIPFHISLIYSTHSW), 54–74 (FIHAFRMQVFFVISGYFSYML), 91–111 (VGIPMLTAIPLLTLPQFILLQ), 140–160 (LWFLLVLVILTTVSIGIFTWF), 173–193 (AISLAKLSLIFFLLGIAYAAI), 212–232 (FIVMQTLFYVPFFILGALAFI), 240–260 (FTTPSRGCTLGAAVAFIAYLL), 274–294 (TESVITMVMGLWMVNVVFSLG), 311–331 (ASLFIYLVHHPLTLFFGAYIT), and 338–358 (LIGFLCGLIFVMGIALILYEI).

It belongs to the acyltransferase 3 family. OpgC subfamily.

The protein resides in the cell membrane. It functions in the pathway glycan metabolism; osmoregulated periplasmic glucan (OPG) biosynthesis. Necessary for the succinyl substitution of periplasmic glucans. Could catalyze the transfer of succinyl residues from the cytoplasmic side of the membrane to the nascent glucan backbones on the periplasmic side of the membrane. The polypeptide is Glucans biosynthesis protein C (Salmonella schwarzengrund (strain CVM19633)).